The primary structure comprises 507 residues: Maturase K (507 aa).

This sequence belongs to the intron maturase 2 family. MatK subfamily.

The protein localises to the plastid. Its subcellular location is the chloroplast. Usually encoded in the trnK tRNA gene intron. Probably assists in splicing its own and other chloroplast group II introns. This chain is Maturase K, found in Kalmia buxifolia (Sand myrtle).